We begin with the raw amino-acid sequence, 181 residues long: Ribonuclease HII (181 aa).

Residues 1–181 (MICGIDEVGR…NLHRRSFKFI (181 aa)) form the RNase H type-2 domain. A divalent metal cation-binding residues include D6, E7, and D98.

It belongs to the RNase HII family. It depends on Mn(2+) as a cofactor. Mg(2+) is required as a cofactor.

The protein resides in the cytoplasm. The catalysed reaction is Endonucleolytic cleavage to 5'-phosphomonoester.. Endonuclease that specifically degrades the RNA of RNA-DNA hybrids. The sequence is that of Ribonuclease HII from Borrelia hermsii (strain HS1 / DAH).